The sequence spans 805 residues: Leucine--tRNA ligase (805 aa).

The short motif at 41–52 (PYPSGAGLHVGH) is the 'HIGH' region element. The short motif at 577–581 (KMSKS) is the 'KMSKS' region element. Position 580 (Lys580) interacts with ATP.

This sequence belongs to the class-I aminoacyl-tRNA synthetase family.

The protein resides in the cytoplasm. The catalysed reaction is tRNA(Leu) + L-leucine + ATP = L-leucyl-tRNA(Leu) + AMP + diphosphate. The sequence is that of Leucine--tRNA ligase from Staphylococcus aureus (strain JH1).